We begin with the raw amino-acid sequence, 370 residues long: UDP-N-acetylglucosamine--N-acetylmuramyl-(pentapeptide) pyrophosphoryl-undecaprenol N-acetylglucosamine transferase (370 aa).

UDP-N-acetyl-alpha-D-glucosamine is bound by residues threonine 20–glycine 22, asparagine 134, arginine 170, serine 204, isoleucine 257, and glutamine 301.

This sequence belongs to the glycosyltransferase 28 family. MurG subfamily.

The protein localises to the cell membrane. It catalyses the reaction di-trans,octa-cis-undecaprenyl diphospho-N-acetyl-alpha-D-muramoyl-L-alanyl-D-glutamyl-meso-2,6-diaminopimeloyl-D-alanyl-D-alanine + UDP-N-acetyl-alpha-D-glucosamine = di-trans,octa-cis-undecaprenyl diphospho-[N-acetyl-alpha-D-glucosaminyl-(1-&gt;4)]-N-acetyl-alpha-D-muramoyl-L-alanyl-D-glutamyl-meso-2,6-diaminopimeloyl-D-alanyl-D-alanine + UDP + H(+). It functions in the pathway cell wall biogenesis; peptidoglycan biosynthesis. Cell wall formation. Catalyzes the transfer of a GlcNAc subunit on undecaprenyl-pyrophosphoryl-MurNAc-pentapeptide (lipid intermediate I) to form undecaprenyl-pyrophosphoryl-MurNAc-(pentapeptide)GlcNAc (lipid intermediate II). The protein is UDP-N-acetylglucosamine--N-acetylmuramyl-(pentapeptide) pyrophosphoryl-undecaprenol N-acetylglucosamine transferase of Corynebacterium jeikeium (strain K411).